A 441-amino-acid chain; its full sequence is Ribosomal protein uS12 methylthiotransferase RimO (441 aa).

Residues 8–118 enclose the MTTase N-terminal domain; that stretch reads PKIGFVSLGC…VLEHVHHYSP (111 aa). [4Fe-4S] cluster is bound by residues cysteine 17, cysteine 53, cysteine 82, cysteine 150, cysteine 154, and cysteine 157. Residues 136–373 enclose the Radical SAM core domain; it reads LTPRHYAYLK…MQLQQQISAE (238 aa). The TRAM domain maps to 376–441; it reads QEKVGREILV…DEYDLWGTRV (66 aa).

This sequence belongs to the methylthiotransferase family. RimO subfamily. [4Fe-4S] cluster serves as cofactor.

The protein localises to the cytoplasm. It carries out the reaction L-aspartate(89)-[ribosomal protein uS12]-hydrogen + (sulfur carrier)-SH + AH2 + 2 S-adenosyl-L-methionine = 3-methylsulfanyl-L-aspartate(89)-[ribosomal protein uS12]-hydrogen + (sulfur carrier)-H + 5'-deoxyadenosine + L-methionine + A + S-adenosyl-L-homocysteine + 2 H(+). Functionally, catalyzes the methylthiolation of an aspartic acid residue of ribosomal protein uS12. This is Ribosomal protein uS12 methylthiotransferase RimO from Klebsiella pneumoniae (strain 342).